Reading from the N-terminus, the 278-residue chain is MYDLTGKHVCYVADCGGIALETSKVLMTKNIAKLAILQSVENPPAIAQLQSIKHSTQIFFWTFDVTMAREEMKKYFDEVMVQMDYIDVLINGATLCDERNIDATINTNLTGMMNTVATVLPYMDRKMGGSGGLIVNVTSVIGLDPSPVFCAYSASKFGVIGFTRSLADPLYYTQNGVAVMAVCCGPTKVFVDRELTAFLAYGQTFADRLRRAPCQSTAVCGQNIVNAIERSENGQIWIADKGGLESVALHWYWHMADQFVNYMQSTDDEDQEFFLGQR.

Residue 11 to 34 (YVADCGGIALETSKVLMTKNIAKL) coordinates NAD(+). A substrate-binding site is contributed by Ser139. Tyr152 serves as the catalytic Proton acceptor.

It belongs to the short-chain dehydrogenases/reductases (SDR) family.

The protein is Alcohol dehydrogenase-related 31 kDa protein (Adhr) of Drosophila persimilis (Fruit fly).